The following is a 312-amino-acid chain: Methionyl-tRNA formyltransferase (312 aa).

(6S)-5,6,7,8-tetrahydrofolate is bound at residue 112–115; that stretch reads SLLP.

It belongs to the Fmt family.

The enzyme catalyses L-methionyl-tRNA(fMet) + (6R)-10-formyltetrahydrofolate = N-formyl-L-methionyl-tRNA(fMet) + (6S)-5,6,7,8-tetrahydrofolate + H(+). In terms of biological role, attaches a formyl group to the free amino group of methionyl-tRNA(fMet). The formyl group appears to play a dual role in the initiator identity of N-formylmethionyl-tRNA by promoting its recognition by IF2 and preventing the misappropriation of this tRNA by the elongation apparatus. This Magnetococcus marinus (strain ATCC BAA-1437 / JCM 17883 / MC-1) protein is Methionyl-tRNA formyltransferase.